A 313-amino-acid polypeptide reads, in one-letter code: Cytochrome c biogenesis protein CcsA (313 aa).

The next 8 membrane-spanning stretches (helical) occupy residues 9–29, 44–64, 71–91, 111–131, 143–163, 217–237, 244–264, and 278–298; these read ILTHISFSIVSIVITIHLITF, GIIVTFFCITGLLVTRWISSG, LYESLIFLSWSFSLIHIIPYF, GFATSGILTEIHQSGILVPAL, MILGYAALLCGSLLSVALLVI, VISLGFTFLTIGILSGAVWAN, WNWDPKETWAFITWIVFAIYL, and AIVASIGFLIIWICYFGVNLL.

The protein belongs to the CcmF/CycK/Ccl1/NrfE/CcsA family. May interact with Ccs1.

The protein resides in the plastid. It is found in the chloroplast thylakoid membrane. Its function is as follows. Required during biogenesis of c-type cytochromes (cytochrome c6 and cytochrome f) at the step of heme attachment. The chain is Cytochrome c biogenesis protein CcsA from Solanum bulbocastanum (Wild potato).